The sequence spans 371 residues: Queuine tRNA-ribosyltransferase (371 aa).

Asp-90 acts as the Proton acceptor in catalysis. Substrate is bound by residues 90–94, Asp-144, Gln-189, and Gly-215; that span reads DSGGF. The interval 246 to 252 is RNA binding; the sequence is GVGTPEN. The active-site Nucleophile is the Asp-265. The interval 270–274 is RNA binding; important for wobble base 34 recognition; it reads TRNAR. The Zn(2+) site is built by Cys-303, Cys-305, Cys-308, and His-334.

It belongs to the queuine tRNA-ribosyltransferase family. As to quaternary structure, homodimer. Within each dimer, one monomer is responsible for RNA recognition and catalysis, while the other monomer binds to the replacement base PreQ1. Zn(2+) is required as a cofactor.

The enzyme catalyses 7-aminomethyl-7-carbaguanine + guanosine(34) in tRNA = 7-aminomethyl-7-carbaguanosine(34) in tRNA + guanine. It functions in the pathway tRNA modification; tRNA-queuosine biosynthesis. Its function is as follows. Catalyzes the base-exchange of a guanine (G) residue with the queuine precursor 7-aminomethyl-7-deazaguanine (PreQ1) at position 34 (anticodon wobble position) in tRNAs with GU(N) anticodons (tRNA-Asp, -Asn, -His and -Tyr). Catalysis occurs through a double-displacement mechanism. The nucleophile active site attacks the C1' of nucleotide 34 to detach the guanine base from the RNA, forming a covalent enzyme-RNA intermediate. The proton acceptor active site deprotonates the incoming PreQ1, allowing a nucleophilic attack on the C1' of the ribose to form the product. After dissociation, two additional enzymatic reactions on the tRNA convert PreQ1 to queuine (Q), resulting in the hypermodified nucleoside queuosine (7-(((4,5-cis-dihydroxy-2-cyclopenten-1-yl)amino)methyl)-7-deazaguanosine). This Helicobacter pylori (strain Shi470) protein is Queuine tRNA-ribosyltransferase.